The primary structure comprises 860 residues: Pentatricopeptide repeat-containing protein At2g40720 (860 aa).

PPR repeat units follow at residues 59-93, 94-124, 132-166, 167-203, 204-234, 236-270, 271-305, 306-340, 341-371, 372-406, 407-437, 438-472, 475-509, 510-540, 541-575, 576-610, 611-641, 642-676, 677-707, and 713-743; these read SVFT…GWRY, DPFI…WSQS, DVTV…GVRP, DAFS…SLDT, DSFL…IEDK, NVVL…SVKL, VSTS…GLHN, DPYV…RLEI, WNAM…SVLP, DSFT…PIQS, TSTI…MEEK, DMVA…DDSL, DSDI…GLVL, NVFV…MSTE, NMVA…GIFP, DSVS…GIPS, DTHL…MQHK, SLIT…GESP, DDVT…MKQD, and NMEH…MPIE. Residues 748-823 are type E motif; the sequence is IWLCLLSASR…QPGCSWIEVS (76 aa). Positions 824 to 854 are type E(+) motif; sequence DRTNVFFSGGSSSPMKAEIFNVLNRLKSNMV.

This sequence belongs to the PPR family. PCMP-E subfamily.

This is Pentatricopeptide repeat-containing protein At2g40720 (PCMP-E26) from Arabidopsis thaliana (Mouse-ear cress).